Here is a 294-residue protein sequence, read N- to C-terminus: 33 kDa chaperonin (294 aa).

Disulfide bonds link C238–C240 and C271–C274.

The protein belongs to the HSP33 family. In terms of processing, under oxidizing conditions two disulfide bonds are formed involving the reactive cysteines. Under reducing conditions zinc is bound to the reactive cysteines and the protein is inactive.

Its subcellular location is the cytoplasm. Functionally, redox regulated molecular chaperone. Protects both thermally unfolding and oxidatively damaged proteins from irreversible aggregation. Plays an important role in the bacterial defense system toward oxidative stress. In Caldanaerobacter subterraneus subsp. tengcongensis (strain DSM 15242 / JCM 11007 / NBRC 100824 / MB4) (Thermoanaerobacter tengcongensis), this protein is 33 kDa chaperonin.